We begin with the raw amino-acid sequence, 606 residues long: Cryptochrome-1 (606 aa).

Positions Val3–Leu132 constitute a Photolyase/cryptochrome alpha/beta domain. Lys11 is covalently cross-linked (Glycyl lysine isopeptide (Lys-Gly) (interchain with G-Cter in ubiquitin)). The short motif at Asn50–Phe54 is the LIR 1 element. Ser71 is subject to Phosphoserine; by AMPK. The LIR 2 signature appears at Asp82 to Leu87. Residue Lys107 forms a Glycyl lysine isopeptide (Lys-Gly) (interchain with G-Cter in ubiquitin) linkage. An LIR 3 motif is present at residues Lys151–Leu156. Lys159 participates in a covalent cross-link: Glycyl lysine isopeptide (Lys-Gly) (interchain with G-Cter in ubiquitin). Residue Ser247 is modified to Phosphoserine; by MAPK. Ser252 lines the FAD pocket. Short sequence motifs (LIR) lie at residues Leu255–Leu260 and Asp271–Val276. Phosphoserine; by AMPK is present on Ser280. The LIR 6 signature appears at Ser285–Leu290. Gln289 serves as a coordination point for FAD. A Glycyl lysine isopeptide (Lys-Gly) (interchain with G-Cter in ubiquitin) cross-link involves residue Lys329. The short motif at Thr335 to Trp339 is the LIR 7 element. His355 provides a ligand contact to FAD. The tract at residues Trp371–Met470 is required for inhibition of CLOCK-BMAL1-mediated transcription. The LIR 8 signature appears at Lys379–Leu384. Asp387–Asp389 is an FAD binding site. 3 consecutive short sequence motifs (LIR) follow at residues Gly395 to Leu400, His411 to Val416, and Arg430 to Val435. The tract at residues Val471–Arg493 is interaction with TIMELESS. Lys485 is covalently cross-linked (Glycyl lysine isopeptide (Lys-Gly) (interchain with G-Cter in ubiquitin)). 2 short sequence motifs (LIR) span residues Gln486–Leu491 and Ser492–Leu497. The tract at residues Tyr559–Asn606 is disordered. Over residues Asp563 to Arg586 the composition is skewed to polar residues. Lys585 participates in a covalent cross-link: Glycyl lysine isopeptide (Lys-Gly) (interchain with G-Cter in ubiquitin). Position 588 is a phosphoserine (Ser588).

It belongs to the DNA photolyase class-1 family. As to quaternary structure, component of the circadian core oscillator, which includes the CRY proteins, CLOCK or NPAS2, BMAL1 or BMAL2, CSNK1D and/or CSNK1E, TIMELESS, and the PER proteins. Interacts directly with TIMELESS. Interacts directly with PER1 and PER2; interaction with PER2 inhibits its ubiquitination and vice versa. Interacts with PER3. Interacts with FBXL21. Interacts with FBXL3. Interacts with PPP5C (via TPR repeats). Interacts with CLOCK-BMAL1 independently of PER2 and DNA. Interacts with HDAC1, HDAC2 and SIN3B. Interacts with nuclear receptors AR, NR1D1, NR3C1/GR, RORA and RORC; the interaction with at least NR3C1/GR is ligand dependent. Interacts with PRKDC. Interacts with the G protein subunit alpha GNAS; the interaction may block GPCR-mediated regulation of cAMP concentrations. Interacts with PRMT5. Interacts with EZH2. Interacts with MYBBP1A, DOCK7, HNRNPU, RPL7A, RPL8 and RPS3. Interacts with MAP1LC3B. Interacts with CLOCK. Interacts with BMAL1. Interacts weakly with HDAC3; this interaction is enhanced in the presence of FBXL3. Interacts with TRIM28, KCTD5 and DDB1. Interacts with DTL. Interacts with DDB1-CUL4A complex. Interacts with FOXO1. Interacts with PSMD2 in a KDM8-dependent manner. Interacts with KDM8 in a FBXL3-dependent manner. Interacts with PPARA. Interacts with PPARG in a ligand-dependent manner. Interacts with PPARD (via domain NR LBD) in a ligand-dependent manner. Interacts with NR1I2 (via domain NR LBD) in a ligand-dependent manner. Interacts with NR1I3, VDR and HNF4A. The cofactor is FAD. It depends on (6R)-5,10-methylene-5,6,7,8-tetrahydrofolate as a cofactor. In terms of processing, phosphorylation on Ser-247 by MAPK is important for the inhibition of CLOCK-BMAL1-mediated transcriptional activity. Phosphorylation by CSNK1E requires interaction with PER1 or PER2. Phosphorylation at Ser-71 and Ser-280 by AMPK decreases protein stability. Phosphorylation at Ser-588 exhibits a robust circadian rhythm with a peak at CT8, increases protein stability, prevents SCF(FBXL3)-mediated degradation and is antagonized by interaction with PRKDC. Post-translationally, ubiquitinated by the SCF(FBXL3) and SCF(FBXL21) complexes, regulating the balance between degradation and stabilization. The SCF(FBXL3) complex is mainly nuclear and mediates ubiquitination and subsequent degradation of CRY1. In contrast, cytoplasmic SCF(FBXL21) complex-mediated ubiquitination leads to stabilize CRY1 and counteract the activity of the SCF(FBXL3) complex. The SCF(FBXL3) and SCF(FBXL21) complexes probably mediate ubiquitination at different Lys residues. Ubiquitination at Lys-11 and Lys-107 are specifically ubiquitinated by the SCF(FBXL21) complex but not by the SCF(FBXL3) complex. Ubiquitination may be inhibited by PER2. Deubiquitinated by USP7. Undergoes autophagy-mediated degradation in the liver in a time-dependent manner. Autophagic degradation of CRY1 (an inhibitor of gluconeogenesis) occurs during periods of reduced feeding allowing induction of gluconeogenesis and maintenance of blood glucose levels. Expressed in cones, amacrine cells, and retinal ganglion cells of the retina (at protein level). Expressed in all tissues examined including heart, brain, spleen, lung, liver, skeletal muscle, kidney and testis. Higher levels in brain, liver and testis. In the retina, highly expressed in the ganglion cell layer (GCL) and in the inner nuclear layer (INL). Evenly distributed in central and peripheral retina. In the brain, highly expressed in the suprachiasmatic nucleus (SCN). High levels in cerebral cortical layers particularly in the pyramidial cell layer of the hippocampus, the granular cell layer of the dentate gyrus (DG) and the pyramidal cell layer of the piriform cortex (PFC).

Its subcellular location is the cytoplasm. The protein resides in the nucleus. With respect to regulation, KL001 (N-[3-(9H-carbazol-9-yl)-2-hydroxypropyl]-N-(2-furanylmethyl)-methanesulfonamide) binds to CRY1 and stabilizes it by inhibiting FBXL3- and ubiquitin-dependent degradation of CRY1 resulting in lengthening of the circadian periods. KL001-mediated CRY1 stabilization can inhibit glucagon-induced gluconeogenesis in primary hepatocytes. Transcriptional repressor which forms a core component of the circadian clock. The circadian clock, an internal time-keeping system, regulates various physiological processes through the generation of approximately 24 hour circadian rhythms in gene expression, which are translated into rhythms in metabolism and behavior. It is derived from the Latin roots 'circa' (about) and 'diem' (day) and acts as an important regulator of a wide array of physiological functions including metabolism, sleep, body temperature, blood pressure, endocrine, immune, cardiovascular, and renal function. Consists of two major components: the central clock, residing in the suprachiasmatic nucleus (SCN) of the brain, and the peripheral clocks that are present in nearly every tissue and organ system. Both the central and peripheral clocks can be reset by environmental cues, also known as Zeitgebers (German for 'timegivers'). The predominant Zeitgeber for the central clock is light, which is sensed by retina and signals directly to the SCN. The central clock entrains the peripheral clocks through neuronal and hormonal signals, body temperature and feeding-related cues, aligning all clocks with the external light/dark cycle. Circadian rhythms allow an organism to achieve temporal homeostasis with its environment at the molecular level by regulating gene expression to create a peak of protein expression once every 24 hours to control when a particular physiological process is most active with respect to the solar day. Transcription and translation of core clock components (CLOCK, NPAS2, BMAL1, BMAL2, PER1, PER2, PER3, CRY1 and CRY2) plays a critical role in rhythm generation, whereas delays imposed by post-translational modifications (PTMs) are important for determining the period (tau) of the rhythms (tau refers to the period of a rhythm and is the length, in time, of one complete cycle). A diurnal rhythm is synchronized with the day/night cycle, while the ultradian and infradian rhythms have a period shorter and longer than 24 hours, respectively. Disruptions in the circadian rhythms contribute to the pathology of cardiovascular diseases, cancer, metabolic syndromes and aging. A transcription/translation feedback loop (TTFL) forms the core of the molecular circadian clock mechanism. Transcription factors, CLOCK or NPAS2 and BMAL1 or BMAL2, form the positive limb of the feedback loop, act in the form of a heterodimer and activate the transcription of core clock genes and clock-controlled genes (involved in key metabolic processes), harboring E-box elements (5'-CACGTG-3') within their promoters. The core clock genes: PER1/2/3 and CRY1/2 which are transcriptional repressors form the negative limb of the feedback loop and interact with the CLOCK|NPAS2-BMAL1|BMAL2 heterodimer inhibiting its activity and thereby negatively regulating their own expression. This heterodimer also activates nuclear receptors NR1D1/2 and RORA/B/G, which form a second feedback loop and which activate and repress BMAL1 transcription, respectively. CRY1 and CRY2 have redundant functions but also differential and selective contributions at least in defining the pace of the SCN circadian clock and its circadian transcriptional outputs. More potent transcriptional repressor in cerebellum and liver than CRY2, though more effective in lengthening the period of the SCN oscillator. On its side, CRY2 seems to play a critical role in tuning SCN circadian period by opposing the action of CRY1. With CRY2, is dispensable for circadian rhythm generation but necessary for the development of intercellular networks for rhythm synchrony. Capable of translocating circadian clock core proteins such as PER proteins to the nucleus. Interacts with CLOCK-BMAL1 independently of PER proteins and is found at CLOCK-BMAL1-bound sites, suggesting that CRY may act as a molecular gatekeeper to maintain CLOCK-BMAL1 in a poised and repressed state until the proper time for transcriptional activation. Represses the CLOCK-BMAL1 induced transcription of BHLHE40/DEC1, ATF4, MTA1, KLF10 and NAMPT. May repress circadian target genes expression in collaboration with HDAC1 and HDAC2 through histone deacetylation. Mediates the clock-control activation of ATR and modulates ATR-mediated DNA damage checkpoint. In liver, mediates circadian regulation of cAMP signaling and gluconeogenesis by binding to membrane-coupled G proteins and blocking glucagon-mediated increases in intracellular cAMP concentrations and CREB1 phosphorylation. Inhibits hepatic gluconeogenesis by decreasing nuclear FOXO1 levels that down-regulates gluconeogenic gene expression. Besides its role in the maintenance of the circadian clock, is also involved in the regulation of other processes. Represses glucocorticoid receptor NR3C1/GR-induced transcriptional activity by binding to glucocorticoid response elements (GREs). Plays a key role in glucose and lipid metabolism modulation, in part, through the transcriptional regulation of genes involved in these pathways, such as LEP or ACSL4. Represses PPARD and its target genes in the skeletal muscle and limits exercise capacity. Plays an essential role in the generation of circadian rhythms in the retina. Represses the transcriptional activity of NR1I2. The sequence is that of Cryptochrome-1 (Cry1) from Mus musculus (Mouse).